Reading from the N-terminus, the 722-residue chain is MKEQNLNKYDEITVQAASDYIDIRPIFQTNGSATFNSNTNITTLTQAINSQAGAIAGKTALDMRHDFTFRADIFLGTKSNGADGIAIAFHRGSIGFVGTKGGGLGILGAPKGIGFELDTYANAPEDEVGDSFGHGAMKGSFPSFPNGYPHAGFVSTDKNSRWLSALAQMQRIAAPNGRWRRLEIRWDARNKELTANLQDLTFNDITVGEKPRTPRTATWRLVNPAFELDQKYTFVIGSATGASNNLHQIGIIEFDAYFTKPTIEANNVNVPVGATFNPKTYPGINLRATDEIDGDLTSKIIVKANNVNTSKTGVYYVTYYVENSYGESDEKTIEVTVFSNPTIIASDVEIEKGESFNPLTDSRVGLSAQDSLGNDITQNVKVKSSNVDTSKPGEYEVVFEVTDSFGGKAEKDFKVTVLGQPSIEANNVELEIDDSLDPLTDAKVGLRAKDSLGNDITKDIKVKFNNVDTSNSGKYEVIFEVTDRFGKKAEKSIEVLVLGEPSIEANDVEVNKGETFEPLTDSRVGLRAKDSLGNDITKDVKIKSSNVDTSKPGEYEVVFEVTDRFGKYVEKTIGVIVPVIDDEWEDGNVNGWKFYAGQDIKLLKDPDKAYKGDYVFYDSRHVAISKTIPLTDLQINTNYEITVYAKAESGDHHLKVTYKKDPAGPEEPPVFNRLISTGTLVEKDYRELKGTFRVTELNKAPLIIVENFGAGYIGGIRIVKIS.

Promotes colloidosmotic lysis by binding to the midgut epithelial cells of hymenopteran species. This is Pesticidal crystal protein Cry22Aa (cry22Aa) from Bacillus thuringiensis.